We begin with the raw amino-acid sequence, 65 residues long: UPF0434 protein HSM_0997 (65 aa).

This sequence belongs to the UPF0434 family.

This chain is UPF0434 protein HSM_0997, found in Histophilus somni (strain 2336) (Haemophilus somnus).